Reading from the N-terminus, the 842-residue chain is Xyloglucanase Xgh74A (842 aa).

A signal peptide spans 1 to 32 (MVKKFTSKIKAAVFAAVVAATAIFGPAISSQA). Residue D70 is the Nucleophile of the active site. BNR repeat units follow at residues 134–144 (RSTDRGETWEK), 185–196 (WRSTDYGVTWSK), 252–262 (YRSTDGGVTWK), and 358–368 (FRSTDGGATWK). D480 functions as the Proton donor in the catalytic mechanism. BNR repeat units lie at residues 533–541 (FSYDGGRNW), 577–586 (VTTDNGNSWK), 616–626 (YISTDGGLTFT), 660–671 (WRSTDGGYTFEK), and 708–718 (FRSDDAGKTWV). Positions 771–841 (DKGLVGDLNG…LLQAIPELPK (71 aa)) constitute a Dockerin domain.

Belongs to the glycosyl hydrolase 74 family.

Hydrolyzes the glucosidic bonds of unbranched Glc residues in tamarind seed xyloglucan, producing XXXG, XLXG, XXLG and XLLG. Has low activity on carboxymethylcellulose, lichenan,hydroxyethylcellulose and glucuronoxylan, and no activity on xylan, polygalaturonic acid, wheat arabinoxylan, rhamnogalacturan, curdlan, laminarin, galactomannan, galactan, arabinan and pachyman or amorphous cellulose. In Acetivibrio thermocellus (strain ATCC 27405 / DSM 1237 / JCM 9322 / NBRC 103400 / NCIMB 10682 / NRRL B-4536 / VPI 7372) (Clostridium thermocellum), this protein is Xyloglucanase Xgh74A.